The sequence spans 412 residues: Imidazolonepropionase (412 aa).

2 residues coordinate Fe(3+): H76 and H78. Zn(2+) contacts are provided by H76 and H78. 4-imidazolone-5-propanoate-binding residues include R85, Y148, and H181. Position 148 (Y148) interacts with N-formimidoyl-L-glutamate. H242 contributes to the Fe(3+) binding site. H242 is a Zn(2+) binding site. E245 is a binding site for 4-imidazolone-5-propanoate. A Fe(3+)-binding site is contributed by D317. Zn(2+) is bound at residue D317. 2 residues coordinate N-formimidoyl-L-glutamate: N319 and G321. 4-imidazolone-5-propanoate is bound at residue S322.

The protein belongs to the metallo-dependent hydrolases superfamily. HutI family. Zn(2+) serves as cofactor. Requires Fe(3+) as cofactor.

It localises to the cytoplasm. It carries out the reaction 4-imidazolone-5-propanoate + H2O = N-formimidoyl-L-glutamate. Its pathway is amino-acid degradation; L-histidine degradation into L-glutamate; N-formimidoyl-L-glutamate from L-histidine: step 3/3. Functionally, catalyzes the hydrolytic cleavage of the carbon-nitrogen bond in imidazolone-5-propanoate to yield N-formimidoyl-L-glutamate. It is the third step in the universal histidine degradation pathway. In Staphylococcus saprophyticus subsp. saprophyticus (strain ATCC 15305 / DSM 20229 / NCIMB 8711 / NCTC 7292 / S-41), this protein is Imidazolonepropionase.